The primary structure comprises 180 residues: ATP synthase subunit delta, chloroplastic (180 aa).

It belongs to the ATPase delta chain family. As to quaternary structure, F-type ATPases have 2 components, F(1) - the catalytic core - and F(0) - the membrane proton channel. F(1) has five subunits: alpha(3), beta(3), gamma(1), delta(1), epsilon(1). CF(0) has four main subunits: a(1), b(1), b'(1) and c(10-14). The alpha and beta chains form an alternating ring which encloses part of the gamma chain. F(1) is attached to F(0) by a central stalk formed by the gamma and epsilon chains, while a peripheral stalk is formed by the delta, b and b' chains.

It localises to the plastid. Its subcellular location is the chloroplast thylakoid membrane. Its function is as follows. F(1)F(0) ATP synthase produces ATP from ADP in the presence of a proton or sodium gradient. F-type ATPases consist of two structural domains, F(1) containing the extramembraneous catalytic core and F(0) containing the membrane proton channel, linked together by a central stalk and a peripheral stalk. During catalysis, ATP synthesis in the catalytic domain of F(1) is coupled via a rotary mechanism of the central stalk subunits to proton translocation. In terms of biological role, this protein is part of the stalk that links CF(0) to CF(1). It either transmits conformational changes from CF(0) to CF(1) or is implicated in proton conduction. The protein is ATP synthase subunit delta, chloroplastic of Rhodomonas salina (Cryptomonas salina).